The sequence spans 411 residues: Ferrochelatase, mitochondrial (411 aa).

A mitochondrion-targeting transit peptide spans M1–S41. The disordered stretch occupies residues V34–K55. The span at S41–K51 shows a compositional bias: basic and acidic residues. The protoporphyrin IX site is built by R102, Y110, and S117. C183 serves as a coordination point for [2Fe-2S] cluster. Catalysis depends on residues H217 and D370. Positions 390, 393, and 398 each coordinate [2Fe-2S] cluster.

Belongs to the ferrochelatase family. As to quaternary structure, homodimer. Homotetramer. Requires [2Fe-2S] cluster as cofactor.

It localises to the mitochondrion inner membrane. The enzyme catalyses heme b + 2 H(+) = protoporphyrin IX + Fe(2+). It participates in porphyrin-containing compound metabolism; protoheme biosynthesis; protoheme from protoporphyrin-IX: step 1/1. In terms of biological role, catalyzes the ferrous insertion into protoporphyrin IX. The sequence is that of Ferrochelatase, mitochondrial from Xenopus laevis (African clawed frog).